Here is a 371-residue protein sequence, read N- to C-terminus: Alginate lyase (371 aa).

Positions 1 to 26 (MQSTDLKRLLIPSLLGLAIVTGSAQA) are cleaved as a signal peptide. Substrate contacts are provided by residues 67–68 (SK), 140–141 (HT), and Tyr-258.

The protein belongs to the polysaccharide lyase 5 family.

Its subcellular location is the periplasm. The enzyme catalyses Eliminative cleavage of alginate to give oligosaccharides with 4-deoxy-alpha-L-erythro-hex-4-enuronosyl groups at their non-reducing ends and beta-D-mannuronate at their reducing end.. Functionally, catalyzes the depolymerization of alginate by cleaving the beta-1,4 glycosidic bond between two adjacent sugar residues via a beta-elimination mechanism. May serve to degrade mislocalized alginate that is trapped in the periplasmic space. In Pseudomonas fluorescens (strain ATCC BAA-477 / NRRL B-23932 / Pf-5), this protein is Alginate lyase.